We begin with the raw amino-acid sequence, 84 residues long: MAKSSKRRPAPEKPVKTRKCVFCAKKDQAIDYKDTALLRTYISERGKIRARRVTGNCVQHQRDIALAVKNAREVALLPFTSSVR.

This sequence belongs to the bacterial ribosomal protein bS18 family. As to quaternary structure, part of the 30S ribosomal subunit. Forms a tight heterodimer with protein bS6.

Functionally, binds as a heterodimer with protein bS6 to the central domain of the 16S rRNA, where it helps stabilize the platform of the 30S subunit. The polypeptide is Small ribosomal subunit protein bS18A (rpsR1) (Mycobacterium bovis (strain ATCC BAA-935 / AF2122/97)).